A 349-amino-acid polypeptide reads, in one-letter code: uncharacterized protein (349 aa).

Serine 2 is subject to Phosphoserine.

This is an uncharacterized protein from Saccharomyces cerevisiae (strain ATCC 204508 / S288c) (Baker's yeast).